We begin with the raw amino-acid sequence, 223 residues long: uncharacterized protein (223 aa).

5 helical membrane passes run 28-48, 59-79, 88-108, 128-148, and 176-196; these read LSNT…GLIT, LIVQ…ITLA, AFNQ…MFFI, IVGL…VWLS, and AWAI…YMIV.

It is found in the cell membrane. This is an uncharacterized protein from Mycoplasma pneumoniae (strain ATCC 29342 / M129 / Subtype 1) (Mycoplasmoides pneumoniae).